The sequence spans 181 residues: ATP-dependent protease subunit HslV (181 aa).

Residue Thr-7 is part of the active site. Na(+) is bound by residues Ala-166, Cys-169, and Thr-172.

Belongs to the peptidase T1B family. HslV subfamily. As to quaternary structure, a double ring-shaped homohexamer of HslV is capped on each side by a ring-shaped HslU homohexamer. The assembly of the HslU/HslV complex is dependent on binding of ATP.

The protein localises to the cytoplasm. It catalyses the reaction ATP-dependent cleavage of peptide bonds with broad specificity.. Its activity is regulated as follows. Allosterically activated by HslU binding. In terms of biological role, protease subunit of a proteasome-like degradation complex believed to be a general protein degrading machinery. This Anaeromyxobacter dehalogenans (strain 2CP-1 / ATCC BAA-258) protein is ATP-dependent protease subunit HslV.